Here is a 147-residue protein sequence, read N- to C-terminus: Lysozyme C-2 (147 aa).

The signal sequence occupies residues 1–18; that stretch reads MKALVILGFLFLSVAVQG. A C-type lysozyme domain is found at 19 to 147; the sequence is KVFERCELAR…VSSYVEGCTL (129 aa). Disulfide bonds link C24–C145, C48–C133, C83–C99, and C95–C113. Active-site residues include E53 and D71.

It belongs to the glycosyl hydrolase 22 family. In terms of assembly, monomer. In terms of tissue distribution, stomach-specific.

The enzyme catalyses Hydrolysis of (1-&gt;4)-beta-linkages between N-acetylmuramic acid and N-acetyl-D-glucosamine residues in a peptidoglycan and between N-acetyl-D-glucosamine residues in chitodextrins.. Lysozymes have primarily a bacteriolytic function; those in tissues and body fluids are associated with the monocyte-macrophage system and enhance the activity of immunoagents. In Bos taurus (Bovine), this protein is Lysozyme C-2 (LYZ2).